The primary structure comprises 229 residues: Purine nucleoside phosphorylase BB_0467 (229 aa).

Zn(2+) contacts are provided by H55, C91, and H108.

The protein belongs to the purine nucleoside phosphorylase YfiH/LACC1 family. As to quaternary structure, homodimer. It depends on Cu(2+) as a cofactor. Requires Zn(2+) as cofactor.

It catalyses the reaction adenosine + phosphate = alpha-D-ribose 1-phosphate + adenine. It carries out the reaction S-methyl-5'-thioadenosine + phosphate = 5-(methylsulfanyl)-alpha-D-ribose 1-phosphate + adenine. The catalysed reaction is inosine + phosphate = alpha-D-ribose 1-phosphate + hypoxanthine. The enzyme catalyses adenosine + H2O + H(+) = inosine + NH4(+). Functionally, purine nucleoside enzyme that catalyzes the phosphorolysis of adenosine and inosine nucleosides, yielding D-ribose 1-phosphate and the respective free bases, adenine and hypoxanthine. Also catalyzes the phosphorolysis of S-methyl-5'-thioadenosine into adenine and S-methyl-5-thio-alpha-D-ribose 1-phosphate. Also has adenosine deaminase activity. The polypeptide is Purine nucleoside phosphorylase BB_0467 (Borreliella burgdorferi (strain ATCC 35210 / DSM 4680 / CIP 102532 / B31) (Borrelia burgdorferi)).